The following is a 668-amino-acid chain: UvrABC system protein B (668 aa).

One can recognise a Helicase ATP-binding domain in the interval 25-176 (THLQSGHSRQ…DQRQLLRNLA (152 aa)). 38–45 (GATGTGKT) lines the ATP pocket. A Beta-hairpin motif is present at residues 91–114 (YYDYYQPEAYIPVTDTFIEKTASI). One can recognise a Helicase C-terminal domain in the interval 429-591 (QVDDLLAEIQ…ITPQPVKKGS (163 aa)). The 36-residue stretch at 626 to 661 (PELITQLEAQMKEAAKNLEFEEAAKYRDRIKNLRSK) folds into the UVR domain.

The protein belongs to the UvrB family. As to quaternary structure, forms a heterotetramer with UvrA during the search for lesions. Interacts with UvrC in an incision complex.

It is found in the cytoplasm. The UvrABC repair system catalyzes the recognition and processing of DNA lesions. A damage recognition complex composed of 2 UvrA and 2 UvrB subunits scans DNA for abnormalities. Upon binding of the UvrA(2)B(2) complex to a putative damaged site, the DNA wraps around one UvrB monomer. DNA wrap is dependent on ATP binding by UvrB and probably causes local melting of the DNA helix, facilitating insertion of UvrB beta-hairpin between the DNA strands. Then UvrB probes one DNA strand for the presence of a lesion. If a lesion is found the UvrA subunits dissociate and the UvrB-DNA preincision complex is formed. This complex is subsequently bound by UvrC and the second UvrB is released. If no lesion is found, the DNA wraps around the other UvrB subunit that will check the other stand for damage. The sequence is that of UvrABC system protein B from Acaryochloris marina (strain MBIC 11017).